The following is a 199-amino-acid chain: Protein GrpE (199 aa).

Residues 1–10 are compositionally biased toward basic and acidic residues; it reads MTNQTEKEQV. Residues 1-44 form a disordered region; it reads MTNQTEKEQVEQDVSQATELAQEAQEAQTQDVEPELQQNNEIDP. Low complexity predominate over residues 16–30; that stretch reads QATELAQEAQEAQTQ.

The protein belongs to the GrpE family. Homodimer.

The protein resides in the cytoplasm. In terms of biological role, participates actively in the response to hyperosmotic and heat shock by preventing the aggregation of stress-denatured proteins, in association with DnaK and GrpE. It is the nucleotide exchange factor for DnaK and may function as a thermosensor. Unfolded proteins bind initially to DnaJ; upon interaction with the DnaJ-bound protein, DnaK hydrolyzes its bound ATP, resulting in the formation of a stable complex. GrpE releases ADP from DnaK; ATP binding to DnaK triggers the release of the substrate protein, thus completing the reaction cycle. Several rounds of ATP-dependent interactions between DnaJ, DnaK and GrpE are required for fully efficient folding. This Glaesserella parasuis serovar 5 (strain SH0165) (Haemophilus parasuis) protein is Protein GrpE.